The sequence spans 286 residues: 4-hydroxybenzoate octaprenyltransferase (286 aa).

Transmembrane regions (helical) follow at residues 20 to 40 (IGTLLLLWPCLMALLLAAGGM), 43 to 63 (LKVLTIFIFGVVVMRACGCII), 95 to 115 (ILFAVMGLFAFGLVLMLNPLV), 142 to 162 (FLGVVWSWSIPMAYAAQTGEV), 167 to 187 (WWLFAANWCWTVAYDTMYAMV), 210 to 230 (QIIGLFQLAALACFITAGWAA), and 234 to 254 (LVYGLGIITFVGFSMYQQKLI).

Belongs to the UbiA prenyltransferase family. Requires Mg(2+) as cofactor.

It is found in the cell inner membrane. It carries out the reaction all-trans-octaprenyl diphosphate + 4-hydroxybenzoate = 4-hydroxy-3-(all-trans-octaprenyl)benzoate + diphosphate. It functions in the pathway cofactor biosynthesis; ubiquinone biosynthesis. Functionally, catalyzes the prenylation of para-hydroxybenzoate (PHB) with an all-trans polyprenyl group. Mediates the second step in the final reaction sequence of ubiquinone-8 (UQ-8) biosynthesis, which is the condensation of the polyisoprenoid side chain with PHB, generating the first membrane-bound Q intermediate 3-octaprenyl-4-hydroxybenzoate. The chain is 4-hydroxybenzoate octaprenyltransferase from Shewanella sediminis (strain HAW-EB3).